We begin with the raw amino-acid sequence, 225 residues long: Phosphoribosyltransferase domain-containing protein 1 (225 aa).

At alanine 2 the chain carries N-acetylalanine. Positions 141 and 142 each coordinate Mg(2+). GMP-binding positions include 141-149 (EDVVGTGRT), lysine 173, 194-195 (FV), and aspartate 201. A Mg(2+)-binding site is contributed by aspartate 201.

Belongs to the purine/pyrimidine phosphoribosyltransferase family. As to quaternary structure, homodimer.

In terms of biological role, has low, barely detectable phosphoribosyltransferase activity (in vitro). Binds GMP, IMP and alpha-D-5-phosphoribosyl 1-pyrophosphate (PRPP). Is not expected to contribute to purine metabolism or GMP salvage. In Homo sapiens (Human), this protein is Phosphoribosyltransferase domain-containing protein 1 (PRTFDC1).